The chain runs to 649 residues: Putative cystathionine gamma-synthase YML082W (649 aa).

The disordered stretch occupies residues 242–273 (NEANHGEDHDGGISGEVDSQEEPHNGLVSTIP). Position 287 is a phosphoserine (Ser-287). Lys-451 carries the N6-(pyridoxal phosphate)lysine modification.

It belongs to the trans-sulfuration enzymes family. MET7 subfamily. Pyridoxal 5'-phosphate serves as cofactor.

The enzyme catalyses O-succinyl-L-homoserine + L-cysteine = L,L-cystathionine + succinate + H(+). Its pathway is amino-acid biosynthesis; L-methionine biosynthesis via de novo pathway; L-cystathionine from O-succinyl-L-homoserine: step 1/1. Catalyzes the formation of L-cystathionine from O-succinyl-L-homoserine (OSHS) and L-cysteine, via a gamma-replacement reaction. In the absence of thiol, catalyzes gamma-elimination to form 2-oxobutanoate, succinate and ammonia. In Saccharomyces cerevisiae (strain ATCC 204508 / S288c) (Baker's yeast), this protein is Putative cystathionine gamma-synthase YML082W.